The chain runs to 462 residues: A-type ATP synthase subunit B (462 aa).

This sequence belongs to the ATPase alpha/beta chains family. In terms of assembly, has multiple subunits with at least A(3), B(3), C, D, E, F, H, I and proteolipid K(x).

The protein localises to the cell membrane. Functionally, component of the A-type ATP synthase that produces ATP from ADP in the presence of a proton gradient across the membrane. The B chain is a regulatory subunit. In Methanobrevibacter smithii (strain ATCC 35061 / DSM 861 / OCM 144 / PS), this protein is A-type ATP synthase subunit B.